A 198-amino-acid polypeptide reads, in one-letter code: Autophagy-related protein 33 (198 aa).

The next 3 helical transmembrane spans lie at 17 to 37 (VSLG…LPAL), 60 to 80 (PVLA…FLAP), and 86 to 106 (PYLL…ILIP). The interval 111–147 (APRRTASSAPRKSSRAKMEASYEVLGDAHSEPASDED) is disordered. Over residues 112–121 (PRRTASSAPR) the composition is skewed to low complexity. Basic and acidic residues predominate over residues 126-142 (AKMEASYEVLGDAHSEP). The helical transmembrane segment at 171-191 (TAISALGFAMAVVGIWGDGAP) threads the bilayer.

It belongs to the ATG33 family.

It is found in the mitochondrion membrane. Involved in the selective degradation of mitochondria via autophagy during starvation and at post-log phase. Autophagy is required for proper vegetative growth, asexual/sexual reproduction, and full virulence. Autophagy is particularly involved in the biosynthesis of deoxynivalenol (DON), an important virulence determinant. This Gibberella zeae (strain ATCC MYA-4620 / CBS 123657 / FGSC 9075 / NRRL 31084 / PH-1) (Wheat head blight fungus) protein is Autophagy-related protein 33.